The primary structure comprises 380 residues: 1-deoxy-D-xylulose 5-phosphate reductoisomerase (380 aa).

8 residues coordinate NADPH: threonine 10, glycine 11, serine 12, isoleucine 13, glycine 36, arginine 37, asparagine 38, and asparagine 120. Lysine 121 serves as a coordination point for 1-deoxy-D-xylulose 5-phosphate. An NADPH-binding site is contributed by glutamate 122. Aspartate 146 is a binding site for Mn(2+). 1-deoxy-D-xylulose 5-phosphate is bound by residues serine 147, glutamate 148, serine 172, and histidine 195. Mn(2+) is bound at residue glutamate 148. Residue glycine 201 participates in NADPH binding. 1-deoxy-D-xylulose 5-phosphate-binding residues include serine 208, asparagine 213, lysine 214, and glutamate 217. A Mn(2+)-binding site is contributed by glutamate 217.

The protein belongs to the DXR family. The cofactor is Mg(2+). Requires Mn(2+) as cofactor.

It carries out the reaction 2-C-methyl-D-erythritol 4-phosphate + NADP(+) = 1-deoxy-D-xylulose 5-phosphate + NADPH + H(+). It participates in isoprenoid biosynthesis; isopentenyl diphosphate biosynthesis via DXP pathway; isopentenyl diphosphate from 1-deoxy-D-xylulose 5-phosphate: step 1/6. Functionally, catalyzes the NADPH-dependent rearrangement and reduction of 1-deoxy-D-xylulose-5-phosphate (DXP) to 2-C-methyl-D-erythritol 4-phosphate (MEP). This chain is 1-deoxy-D-xylulose 5-phosphate reductoisomerase, found in Listeria monocytogenes serotype 4a (strain HCC23).